The following is a 334-amino-acid chain: Nucleoid-associated protein ESA_01050 (334 aa).

It belongs to the YejK family.

The protein resides in the cytoplasm. Its subcellular location is the nucleoid. The polypeptide is Nucleoid-associated protein ESA_01050 (Cronobacter sakazakii (strain ATCC BAA-894) (Enterobacter sakazakii)).